A 116-amino-acid chain; its full sequence is NADH-quinone oxidoreductase subunit A (116 aa).

3 helical membrane-spanning segments follow: residues 3–23 (FTFL…VIAL), 61–81 (FAIL…WAVV), and 88–108 (QGLV…AYAW).

Belongs to the complex I subunit 3 family. NDH-1 is composed of 14 different subunits. Subunits NuoA, H, J, K, L, M, N constitute the membrane sector of the complex.

The protein localises to the cell inner membrane. The enzyme catalyses a quinone + NADH + 5 H(+)(in) = a quinol + NAD(+) + 4 H(+)(out). NDH-1 shuttles electrons from NADH, via FMN and iron-sulfur (Fe-S) centers, to quinones in the respiratory chain. The immediate electron acceptor for the enzyme in this species is believed to be a menaquinone. Couples the redox reaction to proton translocation (for every two electrons transferred, four hydrogen ions are translocated across the cytoplasmic membrane), and thus conserves the redox energy in a proton gradient. The sequence is that of NADH-quinone oxidoreductase subunit A from Bacteroides thetaiotaomicron (strain ATCC 29148 / DSM 2079 / JCM 5827 / CCUG 10774 / NCTC 10582 / VPI-5482 / E50).